Here is a 242-residue protein sequence, read N- to C-terminus: Transcriptional activator protein BjaR1 (242 aa).

In terms of domain architecture, HTH luxR-type spans 173–238 (TPYPSTRLTP…HAVALAIRHK (66 aa)). The H-T-H motif DNA-binding region spans 197 to 216 (AWEIGEILHITQRTAEEHLA).

This sequence belongs to the autoinducer-regulated transcriptional regulatory protein family.

Transcriptional activator that functions in response to the quorum-sensing autoinducer IV-HSL (isovaleryl-homoserine lactone). Activates BjaI expression. Is sensitive to IV-HSL at concentrations as low as 10 pM. The sequence is that of Transcriptional activator protein BjaR1 (bjaR1) from Bradyrhizobium diazoefficiens (strain JCM 10833 / BCRC 13528 / IAM 13628 / NBRC 14792 / USDA 110).